We begin with the raw amino-acid sequence, 394 residues long: 1-deoxy-D-xylulose 5-phosphate reductoisomerase (394 aa).

The NADPH site is built by Thr14, Gly15, Ser16, Ile17, Gly40, and Asn128. Residue Lys129 participates in 1-deoxy-D-xylulose 5-phosphate binding. Glu130 contacts NADPH. Residue Asp154 participates in Mn(2+) binding. 1-deoxy-D-xylulose 5-phosphate contacts are provided by Ser155, Glu156, Ser180, and His203. Glu156 contributes to the Mn(2+) binding site. Gly209 is a binding site for NADPH. 4 residues coordinate 1-deoxy-D-xylulose 5-phosphate: Ser216, Asn221, Lys222, and Glu225. Glu225 provides a ligand contact to Mn(2+).

The protein belongs to the DXR family. Mg(2+) is required as a cofactor. Mn(2+) serves as cofactor.

It catalyses the reaction 2-C-methyl-D-erythritol 4-phosphate + NADP(+) = 1-deoxy-D-xylulose 5-phosphate + NADPH + H(+). It participates in isoprenoid biosynthesis; isopentenyl diphosphate biosynthesis via DXP pathway; isopentenyl diphosphate from 1-deoxy-D-xylulose 5-phosphate: step 1/6. Catalyzes the NADPH-dependent rearrangement and reduction of 1-deoxy-D-xylulose-5-phosphate (DXP) to 2-C-methyl-D-erythritol 4-phosphate (MEP). In Xylella fastidiosa (strain M23), this protein is 1-deoxy-D-xylulose 5-phosphate reductoisomerase.